The primary structure comprises 657 residues: 9-cis-epoxycarotenoid dioxygenase NCED9, chloroplastic (657 aa).

The Fe cation site is built by His-357, His-406, His-471, and His-642.

Belongs to the carotenoid oxygenase family. Requires Fe(2+) as cofactor. Expressed in developing siliques, embryo and endosperm.

The protein localises to the plastid. It localises to the chloroplast stroma. It carries out the reaction a 9-cis-epoxycarotenoid + O2 = a 12'-apo-carotenal + 2-cis,4-trans-xanthoxin. The catalysed reaction is 9-cis-violaxanthin + O2 = (3S,5R,6S)-5,6-epoxy-3-hydroxy-5,6-dihydro-12'-apo-beta-caroten-12'-al + 2-cis,4-trans-xanthoxin. It catalyses the reaction 9'-cis-neoxanthin + O2 = (3S,5R,6R)-3,5-dihydroxy-6,7-didehydro-5,6-dihydro-12'-apo-beta-caroten-12'-al + 2-cis,4-trans-xanthoxin. Its function is as follows. Has a 11,12(11',12') 9-cis epoxycarotenoid cleavage activity. Catalyzes the first step of abscisic-acid biosynthesis from carotenoids. Contributes probably to abscisic acid synthesis for the induction of seed dormancy. The protein is 9-cis-epoxycarotenoid dioxygenase NCED9, chloroplastic (NCED9) of Arabidopsis thaliana (Mouse-ear cress).